Here is a 380-residue protein sequence, read N- to C-terminus: Alcohol dehydrogenase 1 (380 aa).

Cys48, Thr50, His70, Cys100, Cys103, Cys106, Cys114, and Cys178 together coordinate Zn(2+). An alcohol contacts are provided by Thr50 and His70. Residue Thr50 participates in NAD(+) binding. NAD(+)-binding positions include 203-208, Asp227, Arg232, Thr273, Val296, 296-298, and Arg373; these read GLGAVG and VGV.

The protein belongs to the zinc-containing alcohol dehydrogenase family. In terms of assembly, homodimer. Zn(2+) is required as a cofactor.

It is found in the cytoplasm. The catalysed reaction is a primary alcohol + NAD(+) = an aldehyde + NADH + H(+). It catalyses the reaction a secondary alcohol + NAD(+) = a ketone + NADH + H(+). This is Alcohol dehydrogenase 1 from Pisum sativum (Garden pea).